The chain runs to 258 residues: MQKIFRPFQLTRGFTSSVKNFRQWRLIETRKIAKQPNYQVGDAKPLHMPKERKKFPDYKYGESNIFKQSNKGLYGGSFVQFGNNISESKAKTRKKWLPNVVKKGLWSETLNRKISIKMTAKVLKTISKEGGIDNYLTKEKSARIKELGPTGWKLRYRVLKRKDEIENPPHKDAPIIEMAGGKKAKIYYDEIVNGSPRKISVGRRRLMSFLYPLEKLEYRSVGKDLNYKKFVELFADVPVKDILARLEDHKFDLSTITV.

Residues 1–21 (MQKIFRPFQLTRGFTSSVKNF) constitute a mitochondrion transit peptide.

This sequence belongs to the bacterial ribosomal protein bL28 family. Component of the mitochondrial large ribosomal subunit (mt-LSU). Mature yeast 74S mitochondrial ribosomes consist of a small (37S) and a large (54S) subunit. The 37S small subunit contains a 15S ribosomal RNA (15S mt-rRNA) and 34 different proteins. The 54S large subunit contains a 21S rRNA (21S mt-rRNA) and 46 different proteins.

It localises to the mitochondrion. Component of the mitochondrial ribosome (mitoribosome), a dedicated translation machinery responsible for the synthesis of mitochondrial genome-encoded proteins, including at least some of the essential transmembrane subunits of the mitochondrial respiratory chain. The mitoribosomes are attached to the mitochondrial inner membrane and translation products are cotranslationally integrated into the membrane. This is Large ribosomal subunit protein bL28m (MRPL24) from Saccharomyces cerevisiae (strain ATCC 204508 / S288c) (Baker's yeast).